A 335-amino-acid chain; its full sequence is Pyridoxal 5'-phosphate synthase subunit PdxS (335 aa).

Residue aspartate 30 coordinates D-ribose 5-phosphate. The Schiff-base intermediate with D-ribose 5-phosphate role is filled by lysine 87. Glycine 159 provides a ligand contact to D-ribose 5-phosphate. Arginine 171 contributes to the D-glyceraldehyde 3-phosphate binding site. Residues glycine 257 and 278-279 contribute to the D-ribose 5-phosphate site; that span reads GS.

The protein belongs to the PdxS/SNZ family. As to quaternary structure, in the presence of PdxT, forms a dodecamer of heterodimers.

The enzyme catalyses aldehydo-D-ribose 5-phosphate + D-glyceraldehyde 3-phosphate + L-glutamine = pyridoxal 5'-phosphate + L-glutamate + phosphate + 3 H2O + H(+). It functions in the pathway cofactor biosynthesis; pyridoxal 5'-phosphate biosynthesis. Functionally, catalyzes the formation of pyridoxal 5'-phosphate from ribose 5-phosphate (RBP), glyceraldehyde 3-phosphate (G3P) and ammonia. The ammonia is provided by the PdxT subunit. Can also use ribulose 5-phosphate and dihydroxyacetone phosphate as substrates, resulting from enzyme-catalyzed isomerization of RBP and G3P, respectively. This is Pyridoxal 5'-phosphate synthase subunit PdxS from Thermococcus kodakarensis (strain ATCC BAA-918 / JCM 12380 / KOD1) (Pyrococcus kodakaraensis (strain KOD1)).